The chain runs to 200 residues: MYAYFRGRVVSVLPEEAVLEVSGIAYRFLISTGTSRSLPQAGNEAILYTHLSVREDALQLYGFSSEEEKQLFRLLLLVSGVGPKLALAVLSGLPVAEVHEAILANAPERLFGVTGVGRKTAARIILELRDRILKLSPPGAAATPAGAVQCGIREDATNALLTLGFSRTAAQQAVAGVLEANPGGSVEDVVKSALLAMHNR.

The interval 1-64 (MYAYFRGRVV…EDALQLYGFS (64 aa)) is domain I. The interval 65–143 (SEEEKQLFRL…KLSPPGAAAT (79 aa)) is domain II. The interval 144–154 (PAGAVQCGIRE) is flexible linker. Residues 154 to 200 (EDATNALLTLGFSRTAAQQAVAGVLEANPGGSVEDVVKSALLAMHNR) form a domain III region.

The protein belongs to the RuvA family. In terms of assembly, homotetramer. Forms an RuvA(8)-RuvB(12)-Holliday junction (HJ) complex. HJ DNA is sandwiched between 2 RuvA tetramers; dsDNA enters through RuvA and exits via RuvB. An RuvB hexamer assembles on each DNA strand where it exits the tetramer. Each RuvB hexamer is contacted by two RuvA subunits (via domain III) on 2 adjacent RuvB subunits; this complex drives branch migration. In the full resolvosome a probable DNA-RuvA(4)-RuvB(12)-RuvC(2) complex forms which resolves the HJ.

The protein localises to the cytoplasm. In terms of biological role, the RuvA-RuvB-RuvC complex processes Holliday junction (HJ) DNA during genetic recombination and DNA repair, while the RuvA-RuvB complex plays an important role in the rescue of blocked DNA replication forks via replication fork reversal (RFR). RuvA specifically binds to HJ cruciform DNA, conferring on it an open structure. The RuvB hexamer acts as an ATP-dependent pump, pulling dsDNA into and through the RuvAB complex. HJ branch migration allows RuvC to scan DNA until it finds its consensus sequence, where it cleaves and resolves the cruciform DNA. This chain is Holliday junction branch migration complex subunit RuvA, found in Chlorobium luteolum (strain DSM 273 / BCRC 81028 / 2530) (Pelodictyon luteolum).